The chain runs to 857 residues: Protein app1 (857 aa).

The 128-residue stretch at aspartate 6–alanine 133 folds into the ADF-H domain. Disordered regions lie at residues alanine 167–arginine 562, glutamate 585–arginine 622, and glutamine 693–threonine 723. Basic and acidic residues predominate over residues lysine 193–serine 204. Over residues lysine 205–asparagine 217 the composition is skewed to low complexity. Basic and acidic residues predominate over residues alanine 229–proline 240. Polar residues-rich tracts occupy residues serine 276–proline 295, proline 371–threonine 385, lysine 399–glutamine 409, lysine 443–glycine 452, and serine 498–threonine 511. Residues valine 522–glutamine 561 show a composition bias toward low complexity. Composition is skewed to pro residues over residues proline 587–proline 596 and proline 602–proline 611. A compositionally biased stretch (low complexity) spans valine 612 to arginine 622. SH3 domains follow at residues proline 725–proline 785 and glycine 800–isoleucine 857.

In Schizosaccharomyces pombe (strain 972 / ATCC 24843) (Fission yeast), this protein is Protein app1 (app1).